We begin with the raw amino-acid sequence, 795 residues long: Phenylalanine--tRNA ligase beta subunit (795 aa).

The region spanning 39 to 149 (SGEFSGVVVA…ADAPIGVDIR (111 aa)) is the tRNA-binding domain. A B5 domain is found at 402 to 477 (PKQPIIRLRR…RIYGYNRIPN (76 aa)). Positions 455, 461, 464, and 465 each coordinate Mg(2+). Residues 701–794 (SKFPANNRDI…LAQRFQASLR (94 aa)) enclose the FDX-ACB domain.

Belongs to the phenylalanyl-tRNA synthetase beta subunit family. Type 1 subfamily. In terms of assembly, tetramer of two alpha and two beta subunits. Requires Mg(2+) as cofactor.

It localises to the cytoplasm. It catalyses the reaction tRNA(Phe) + L-phenylalanine + ATP = L-phenylalanyl-tRNA(Phe) + AMP + diphosphate + H(+). The sequence is that of Phenylalanine--tRNA ligase beta subunit from Haemophilus ducreyi (strain 35000HP / ATCC 700724).